Reading from the N-terminus, the 156-residue chain is ATP synthase subunit b (156 aa).

A helical membrane pass occupies residues 7–27 (LFAQLVVFFILAWFTMKFVWP).

Belongs to the ATPase B chain family. In terms of assembly, F-type ATPases have 2 components, F(1) - the catalytic core - and F(0) - the membrane proton channel. F(1) has five subunits: alpha(3), beta(3), gamma(1), delta(1), epsilon(1). F(0) has four main subunits: a(1), b(2) and c(10-14). The alpha and beta chains form an alternating ring which encloses part of the gamma chain. F(1) is attached to F(0) by a central stalk formed by the gamma and epsilon chains, while a peripheral stalk is formed by the delta and b chains.

It is found in the cell inner membrane. In terms of biological role, f(1)F(0) ATP synthase produces ATP from ADP in the presence of a proton or sodium gradient. F-type ATPases consist of two structural domains, F(1) containing the extramembraneous catalytic core and F(0) containing the membrane proton channel, linked together by a central stalk and a peripheral stalk. During catalysis, ATP synthesis in the catalytic domain of F(1) is coupled via a rotary mechanism of the central stalk subunits to proton translocation. Functionally, component of the F(0) channel, it forms part of the peripheral stalk, linking F(1) to F(0). This Methylibium petroleiphilum (strain ATCC BAA-1232 / LMG 22953 / PM1) protein is ATP synthase subunit b.